Consider the following 611-residue polypeptide: Immunoglobulin superfamily member 8 (611 aa).

The signal sequence occupies residues 1–25; sequence MGVPSPTPLSSLLLLLLILGTRCYA. 4 Ig-like C2-type domains span residues 26 to 143, 160 to 284, 301 to 422, and 429 to 554; these read RQVH…AKVE, PRGR…WVQV, SQLA…EAAS, and PVHV…ADYS. The Extracellular portion of the chain corresponds to 26–577; that stretch reads RQVHVPRGPL…VYPYTHAVDT (552 aa). A disulfide bridge links Cys47 with Cys125. 2 N-linked (GlcNAc...) asparagine glycosylation sites follow: Asn48 and Asn137. Cys184 and Cys268 are joined by a disulfide. Positions 272–274 match the EWI motif motif; that stretch reads EWI. Intrachain disulfides connect Cys324/Cys404 and Cys460/Cys542. Asn325 carries N-linked (GlcNAc...) asparagine glycosylation. Ser516 is modified (phosphoserine). The chain crosses the membrane as a helical span at residues 578–598; the sequence is LFVPLLVGTGVALVTGASVLA. Topologically, residues 599–611 are cytoplasmic; it reads TITCCFMKRMRKR. S-palmitoyl cysteine attachment occurs at residues Cys602 and Cys603.

As to quaternary structure, interacts directly with CD82 and CD9/tetraspanin-29. Also interacts with integrin alpha-3/beta-1 and integrin alpha-4/beta-1. Part of a complex composed of CD9, PTGFRN and CD81. Interacts with CD81/tetraspanin-28. As to expression, expressed in lymphocytes as well as in many tissues with higher expression in brain. Detected in all regions of the brain with weak expression in the pituitary. Expressed selectively by neurons but not by glial cells. Expressed in myoblasts (at protein level).

It localises to the cell membrane. Its function is as follows. Member of the immunoglobulin superfamily (IgSF) that links tetraspanin-enriched microdomains to the actin cytoskeleton and plays several important roles in innate and adaptive immunity. Acts as an inducible receptor of HSPA8 on dendritic cells to enhance the CCL21/SLC-dependent migration of activated mature dendritic cells while attenuating their antigen-specific stimulatory capacities. In complex with alpha-actinins ACTN1 and ACTN4, regulates actin dynamics in the immune synapse and subsequent T-cell activation. Inhibits the entry of several viruses such as hepatitis C Virus (HCV) or HIV-1. Mechanistically, promotes a change in CD81 organization at the plasma membrane by significantly restricting its diffusion which in turn influences CD81 interaction with Claudin-1/CLDN1, preventing CLDN1 from acting as a co-receptor required for HCV entry. Accumulates at the presynaptic terminal, the producer cell side of the virological synapse, to prevent HIV-1 Env-mediated cell-cell fusion. Highly expressed on malignant cells with antigen presentation defects, interacts with NK receptor KLRA9 to suppress NK-cell cytotoxicity. May participate in the regulation of neurite outgrowth and maintenance of the neural network in the adult brain. This Mus musculus (Mouse) protein is Immunoglobulin superfamily member 8 (Igsf8).